Reading from the N-terminus, the 165-residue chain is Large ribosomal subunit protein uL15 (165 aa).

Residues Met1–Asn44 are disordered. The segment covering Arg21–Gly37 has biased composition (gly residues).

The protein belongs to the universal ribosomal protein uL15 family. Part of the 50S ribosomal subunit.

Functionally, binds to the 23S rRNA. The protein is Large ribosomal subunit protein uL15 of Anaeromyxobacter dehalogenans (strain 2CP-C).